A 333-amino-acid polypeptide reads, in one-letter code: Late embryogenesis abundant protein 1 (333 aa).

Disordered stretches follow at residues 1-20 (MASR…RRAA) and 116-246 (KDYT…GQGQ). Residues 3-52 (SRQDRREARAEADARRAAEEIARARDERVMQAEVDARSAADEIARARADR) are a coiled coil. 3 stretches are compositionally biased toward basic and acidic residues: residues 116 to 163 (KDYT…KDAV), 172 to 219 (EATK…DATK), and 227 to 241 (DKAR…DATD).

It belongs to the LEA type 4 family.

In Oryza sativa subsp. indica (Rice), this protein is Late embryogenesis abundant protein 1 (LEA1).